A 335-amino-acid chain; its full sequence is Beta-ketoacyl-[acyl-carrier-protein] synthase III (335 aa).

Catalysis depends on residues Cys116 and His256. Positions Gln257 to Arg261 are ACP-binding. Asn286 is a catalytic residue.

Belongs to the thiolase-like superfamily. FabH family. In terms of assembly, homodimer.

It is found in the cytoplasm. It catalyses the reaction malonyl-[ACP] + acetyl-CoA + H(+) = 3-oxobutanoyl-[ACP] + CO2 + CoA. The protein operates within lipid metabolism; fatty acid biosynthesis. In terms of biological role, catalyzes the condensation reaction of fatty acid synthesis by the addition to an acyl acceptor of two carbons from malonyl-ACP. Catalyzes the first condensation reaction which initiates fatty acid synthesis and may therefore play a role in governing the total rate of fatty acid production. Possesses both acetoacetyl-ACP synthase and acetyl transacylase activities. Its substrate specificity determines the biosynthesis of branched-chain and/or straight-chain of fatty acids. The protein is Beta-ketoacyl-[acyl-carrier-protein] synthase III of Porphyromonas gingivalis (strain ATCC 33277 / DSM 20709 / CIP 103683 / JCM 12257 / NCTC 11834 / 2561).